Here is an 895-residue protein sequence, read N- to C-terminus: Pyruvate dehydrogenase E1 component (895 aa).

The interval 1–20 (MSAVPEQILGASSANDADPQ) is disordered.

As to quaternary structure, homodimer. Part of the PDH complex, consisting of multiple copies of pyruvate dehydrogenase (E1), dihydrolipoamide acetyltransferase (E2) and lipoamide dehydrogenase (E3). Requires thiamine diphosphate as cofactor.

It catalyses the reaction N(6)-[(R)-lipoyl]-L-lysyl-[protein] + pyruvate + H(+) = N(6)-[(R)-S(8)-acetyldihydrolipoyl]-L-lysyl-[protein] + CO2. Functionally, component of the pyruvate dehydrogenase (PDH) complex, that catalyzes the overall conversion of pyruvate to acetyl-CoA and CO(2). The chain is Pyruvate dehydrogenase E1 component (pdhA) from Cupriavidus necator (strain ATCC 17699 / DSM 428 / KCTC 22496 / NCIMB 10442 / H16 / Stanier 337) (Ralstonia eutropha).